The sequence spans 2214 residues: Multifunctional protein URA2 (2214 aa).

A2 bears the N-acetylalanine mark. The GATase (Glutamine amidotransferase) stretch occupies residues A2–F400. 3 residues coordinate L-glutamine: S64, G273, and G275. Residues R228–T413 enclose the Glutamine amidotransferase type-1 domain. C302 functions as the Nucleophile; for GATase activity in the catalytic mechanism. Residues L303, Q306, N344, G346, and F347 each coordinate L-glutamine. Residues H386 and E388 each act as for GATase activity in the active site. Positions D401 to K440 are linker. The tract at residues K440–H980 is CPSase A. The segment at K440–I1482 is CPSase (Carbamoyl phosphate synthase). Residues R558, R598, G604, G605, K635, M637, E642, G668, I669, H670, Q711, and E725 each coordinate ATP. ATP-grasp domains lie at S562–L754 and S1099–M1290. Positions 711, 725, and 727 each coordinate Mg(2+). Mn(2+) is bound by residues Q711, E725, and N727. Positions G981 to I1482 are CPSase B. Positions 1135, 1174, 1176, 1181, 1206, 1207, 1208, 1209, 1249, and 1261 each coordinate ATP. Positions 1249, 1261, and 1263 each coordinate Mg(2+). Positions 1249, 1261, and 1263 each coordinate Mn(2+). The region spanning F1356–P1508 is the MGS-like domain. Residues E1483–D1492 form a linker region. A defective DHOase domain region spans residues V1493–G1821. The segment at E1822–R1909 is linker. Residue K1853 forms a Glycyl lysine isopeptide (Lys-Gly) (interchain with G-Cter in ubiquitin) linkage. Residue S1857 is modified to Phosphoserine; by PKA. Residues G1910–M2214 are ATCase (Aspartate transcarbamylase). R1962 and T1963 together coordinate carbamoyl phosphate. K1990 is an L-aspartate binding site. 3 residues coordinate carbamoyl phosphate: R2011, H2039, and Q2042. Positions 2072 and 2134 each coordinate L-aspartate. Carbamoyl phosphate is bound by residues L2173 and P2174.

This sequence in the N-terminal section; belongs to the CarA family. The protein in the 2nd section; belongs to the CarB family. It in the 3rd section; belongs to the metallo-dependent hydrolases superfamily. DHOase family. CAD subfamily. In the C-terminal section; belongs to the aspartate/ornithine carbamoyltransferase superfamily. ATCase family. The cofactor is Mg(2+). Mn(2+) is required as a cofactor.

The protein resides in the cytoplasm. It catalyses the reaction hydrogencarbonate + L-glutamine + 2 ATP + H2O = carbamoyl phosphate + L-glutamate + 2 ADP + phosphate + 2 H(+). The enzyme catalyses L-glutamine + H2O = L-glutamate + NH4(+). It carries out the reaction hydrogencarbonate + NH4(+) + 2 ATP = carbamoyl phosphate + 2 ADP + phosphate + 2 H(+). The catalysed reaction is carbamoyl phosphate + L-aspartate = N-carbamoyl-L-aspartate + phosphate + H(+). The protein operates within pyrimidine metabolism; UMP biosynthesis via de novo pathway; (S)-dihydroorotate from bicarbonate: step 1/3. It participates in pyrimidine metabolism; UMP biosynthesis via de novo pathway; (S)-dihydroorotate from bicarbonate: step 2/3. Both CPSase and ATCase activities are feedback inhibited by the end product UTP. Its function is as follows. Multifunctional protein that encodes the first 2 enzymatic activities of the de novo pyrimidine pathway: carbamoylphosphate synthetase (CPSase; EC 6.3.5.5) and aspartate transcarbamylase (ATCase; EC 2.1.3.2). The CPSase-function is accomplished in 2 steps, by a glutamine-dependent amidotransferase activity (GATase) that binds and cleaves glutamine to produce ammonia, followed by an ammonium-dependent carbamoyl phosphate synthetase, which reacts with the ammonia, hydrogencarbonate and ATP to form carbamoyl phosphate. The endogenously produced carbamoyl phosphate is sequestered and channeled to the ATCase active site. ATCase then catalyzes the formation of carbamoyl-L-aspartate from L-aspartate and carbamoyl phosphate. This chain is Multifunctional protein URA2 (URA2), found in Saccharomyces cerevisiae (strain ATCC 204508 / S288c) (Baker's yeast).